Here is a 328-residue protein sequence, read N- to C-terminus: D-cysteine desulfhydrase (328 aa).

The residue at position 51 (Lys51) is an N6-(pyridoxal phosphate)lysine.

This sequence belongs to the ACC deaminase/D-cysteine desulfhydrase family. As to quaternary structure, homodimer. Requires pyridoxal 5'-phosphate as cofactor.

It carries out the reaction D-cysteine + H2O = hydrogen sulfide + pyruvate + NH4(+) + H(+). In terms of biological role, catalyzes the alpha,beta-elimination reaction of D-cysteine and of several D-cysteine derivatives. It could be a defense mechanism against D-cysteine. This chain is D-cysteine desulfhydrase, found in Escherichia coli O7:K1 (strain IAI39 / ExPEC).